The primary structure comprises 310 residues: Oxygen-dependent coproporphyrinogen-III oxidase (310 aa).

Serine 93 lines the substrate pocket. Residues histidine 97 and histidine 107 each contribute to the a divalent metal cation site. Histidine 107 acts as the Proton donor in catalysis. 109-111 (NVR) serves as a coordination point for substrate. Residues histidine 146 and histidine 176 each contribute to the a divalent metal cation site. Residues 241–276 (YVEFNLVYDRGTLFGLQSGGRTESILMSLPPQVRWS) are important for dimerization. Residue 259-261 (GGR) participates in substrate binding.

This sequence belongs to the aerobic coproporphyrinogen-III oxidase family. In terms of assembly, homodimer. A divalent metal cation is required as a cofactor.

It localises to the cytoplasm. It catalyses the reaction coproporphyrinogen III + O2 + 2 H(+) = protoporphyrinogen IX + 2 CO2 + 2 H2O. The protein operates within porphyrin-containing compound metabolism; protoporphyrin-IX biosynthesis; protoporphyrinogen-IX from coproporphyrinogen-III (O2 route): step 1/1. Involved in the heme biosynthesis. Catalyzes the aerobic oxidative decarboxylation of propionate groups of rings A and B of coproporphyrinogen-III to yield the vinyl groups in protoporphyrinogen-IX. The polypeptide is Oxygen-dependent coproporphyrinogen-III oxidase (Pseudomonas fluorescens (strain SBW25)).